We begin with the raw amino-acid sequence, 586 residues long: NudC domain-containing protein 1 (586 aa).

The disordered stretch occupies residues Lys-259–Pro-278. The CS domain occupies Lys-275–Val-364.

It is found in the cytoplasm. The protein resides in the nucleus. In Xenopus tropicalis (Western clawed frog), this protein is NudC domain-containing protein 1.